A 122-amino-acid polypeptide reads, in one-letter code: Small ribosomal subunit protein uS12c (122 aa).

The protein belongs to the universal ribosomal protein uS12 family. In terms of assembly, part of the 30S ribosomal subunit.

Its subcellular location is the plastid. It is found in the chloroplast. With S4 and S5 plays an important role in translational accuracy. Located at the interface of the 30S and 50S subunits. The protein is Small ribosomal subunit protein uS12c (rps12) of Mesostigma viride (Green alga).